A 348-amino-acid polypeptide reads, in one-letter code: Probable dual-specificity RNA methyltransferase RlmN (348 aa).

The active-site Proton acceptor is glutamate 89. The Radical SAM core domain occupies 95 to 328; that stretch reads HKNRNTVCVS…VTLRISYGSK (234 aa). Cysteine 102 and cysteine 333 are disulfide-bonded. Residues cysteine 109, cysteine 113, and cysteine 116 each coordinate [4Fe-4S] cluster. Residues 159-160, serine 191, 214-216, and asparagine 290 each bind S-adenosyl-L-methionine; these read GE and SLH. Cysteine 333 (S-methylcysteine intermediate) is an active-site residue.

This sequence belongs to the radical SAM superfamily. RlmN family. The cofactor is [4Fe-4S] cluster.

Its subcellular location is the cytoplasm. The enzyme catalyses adenosine(2503) in 23S rRNA + 2 reduced [2Fe-2S]-[ferredoxin] + 2 S-adenosyl-L-methionine = 2-methyladenosine(2503) in 23S rRNA + 5'-deoxyadenosine + L-methionine + 2 oxidized [2Fe-2S]-[ferredoxin] + S-adenosyl-L-homocysteine. It carries out the reaction adenosine(37) in tRNA + 2 reduced [2Fe-2S]-[ferredoxin] + 2 S-adenosyl-L-methionine = 2-methyladenosine(37) in tRNA + 5'-deoxyadenosine + L-methionine + 2 oxidized [2Fe-2S]-[ferredoxin] + S-adenosyl-L-homocysteine. In terms of biological role, specifically methylates position 2 of adenine 2503 in 23S rRNA and position 2 of adenine 37 in tRNAs. This Dictyoglomus turgidum (strain DSM 6724 / Z-1310) protein is Probable dual-specificity RNA methyltransferase RlmN.